The chain runs to 31 residues: Superoxide dismutase [Cu-Zn] (31 aa).

This sequence belongs to the Cu-Zn superoxide dismutase family. Requires Cu cation as cofactor. It depends on Zn(2+) as a cofactor.

Its subcellular location is the cytoplasm. It catalyses the reaction 2 superoxide + 2 H(+) = H2O2 + O2. Functionally, destroys radicals which are normally produced within the cells and which are toxic to biological systems. The chain is Superoxide dismutase [Cu-Zn] from Striga hermonthica (Purple witchweed).